Consider the following 475-residue polypeptide: Chromosomal replication initiator protein DnaA (475 aa).

The tract at residues 1–73 (MSDIEQERWS…LACWQAELPD (73 aa)) is domain I, interacts with DnaA modulators. The domain II stretch occupies residues 73 to 131 (DVHRIDLMVRSAMRCAAPAKEAPAADPRRPEHGDGRASTELKMVATAPASANHDALGGS). Residues 132–354 (PLDPRLTFAS…GAINRLLAHS (223 aa)) are domain III, AAA+ region. Positions 179, 181, 182, and 183 each coordinate ATP. Positions 355 to 475 (KLNAQPVTLE…VELLKRQLQE (121 aa)) are domain IV, binds dsDNA.

Belongs to the DnaA family. Oligomerizes as a right-handed, spiral filament on DNA at oriC.

It localises to the cytoplasm. Plays an essential role in the initiation and regulation of chromosomal replication. ATP-DnaA binds to the origin of replication (oriC) to initiate formation of the DNA replication initiation complex once per cell cycle. Binds the DnaA box (a 9 base pair repeat at the origin) and separates the double-stranded (ds)DNA. Forms a right-handed helical filament on oriC DNA; dsDNA binds to the exterior of the filament while single-stranded (ss)DNA is stabiized in the filament's interior. The ATP-DnaA-oriC complex binds and stabilizes one strand of the AT-rich DNA unwinding element (DUE), permitting loading of DNA polymerase. After initiation quickly degrades to an ADP-DnaA complex that is not apt for DNA replication. Binds acidic phospholipids. The polypeptide is Chromosomal replication initiator protein DnaA (Nitrobacter hamburgensis (strain DSM 10229 / NCIMB 13809 / X14)).